The primary structure comprises 211 residues: Large ribosomal subunit protein bL25 (211 aa).

The tract at residues 186-211 is disordered; the sequence is GRALQSMDAAESAVEQPGEQPATAAG.

It belongs to the bacterial ribosomal protein bL25 family. CTC subfamily. Part of the 50S ribosomal subunit; part of the 5S rRNA/L5/L18/L25 subcomplex. Contacts the 5S rRNA. Binds to the 5S rRNA independently of L5 and L18.

In terms of biological role, this is one of the proteins that binds to the 5S RNA in the ribosome where it forms part of the central protuberance. The sequence is that of Large ribosomal subunit protein bL25 from Gloeobacter violaceus (strain ATCC 29082 / PCC 7421).